We begin with the raw amino-acid sequence, 352 residues long: MEGISIYTSDNYTEEMGSGDYDSIKEPCFREKNAHFNRIFLPTIYSIIFLTGIVGNGLVILVMGYQKKLRSMTDKYRLHLSVADLLFVITLPFWAVDAVANWYFGNFLCKAVHVIYTVNLYSSVLILAFISLDRYLAIVHATNSQKPRKLLAEKVVYVGVWIPALLLTIPGFIFASVSEADDRFICDRFYPNDLWVVVFQFQHIMVGLILPGIVILSCYCIIISKLSHSKGHQKRKALKTTVILILAFFACWLPYYIGISIDSFILLEIIKQGCEFENTVHKWISITEALAFFHCCLNPILYAFLGAKFKTSAQHALTSVSRGSSLKILSKGKRGGHSSVSTESESSSFHSS.

Residues 1–21 (MEGISIYTSDNYTEEMGSGDY) are important for chemokine binding and signaling. Topologically, residues 1 to 38 (MEGISIYTSDNYTEEMGSGDYDSIKEPCFREKNAHFNR) are extracellular. Position 7 is a sulfotyrosine (Tyr-7). Asn-11 is a glycosylation site (N-linked (GlcNAc...) asparagine). A Sulfotyrosine modification is found at Tyr-12. An O-linked (Xyl...) (chondroitin sulfate) serine glycan is attached at Ser-18. At Tyr-21 the chain carries Sulfotyrosine. Intrachain disulfides connect Cys-28/Cys-274 and Cys-109/Cys-186. The helical transmembrane segment at 39-63 (IFLPTIYSIIFLTGIVGNGLVILVM) threads the bilayer. The Cytoplasmic segment spans residues 64–77 (GYQKKLRSMTDKYR). A helical membrane pass occupies residues 78–99 (LHLSVADLLFVITLPFWAVDAV). Residues 94 to 97 (WAVD) form a chemokine binding region. At 100–110 (ANWYFGNFLCK) the chain is on the extracellular side. The helical transmembrane segment at 111 to 130 (AVHVIYTVNLYSSVLILAFI) threads the bilayer. Residues 113–117 (HVIYT) are chemokine binding. Topologically, residues 131 to 154 (SLDRYLAIVHATNSQKPRKLLAEK) are cytoplasmic. Positions 133–135 (DRY) match the Important for signaling motif. Residues 135–147 (YLAIVHATNSQKP) are involved in dimerization; when bound to chemokine. Residues 155–174 (VVYVGVWIPALLLTIPGFIF) form a helical membrane-spanning segment. At 175-195 (ASVSEADDRFICDRFYPNDLW) the chain is on the extracellular side. The interval 186–190 (CDRFY) is chemokine binding, important for signaling. Residues 191–210 (PNDLWVVVFQFQHIMVGLIL) are involved in dimerization. A helical membrane pass occupies residues 196–216 (VVVFQFQHIMVGLILPGIVIL). Residues 217–241 (SCYCIIISKLSHSKGHQKRKALKTT) are Cytoplasmic-facing. Residues 242 to 261 (VILILAFFACWLPYYIGISI) traverse the membrane as a helical segment. Topologically, residues 262 to 282 (DSFILLEIIKQGCEFENTVHK) are extracellular. The tract at residues 266 to 268 (LLE) is involved in dimerization. A helical transmembrane segment spans residues 283–302 (WISITEALAFFHCCLNPILY). Residues 303-352 (AFLGAKFKTSAQHALTSVSRGSSLKILSKGKRGGHSSVSTESESSSFHSS) lie on the Cytoplasmic side of the membrane. Phosphoserine is present on residues Ser-319 and Ser-321. 2 positions are modified to phosphoserine; by PKC and GRK6: Ser-324 and Ser-325. The disordered stretch occupies residues 329–352 (LSKGKRGGHSSVSTESESSSFHSS). Ser-330 carries the post-translational modification Phosphoserine; by GRK6. Lys-331 is covalently cross-linked (Glycyl lysine isopeptide (Lys-Gly) (interchain with G-Cter in ubiquitin)). Residues 337–352 (HSSVSTESESSSFHSS) are compositionally biased toward low complexity. Position 339 is a phosphoserine; by GRK6 (Ser-339). Phosphoserine occurs at positions 348 and 351.

This sequence belongs to the G-protein coupled receptor 1 family. As to quaternary structure, monomer. Can form homodimers. Interacts with CD164. Interacts with ARRB2; the interaction is dependent on the C-terminal phosphorylation of CXCR4 and allows activation of MAPK1 and MAPK3. Interacts with ARR3; the interaction is dependent on the C-terminal phosphorylation of CXCR4 and modulates calcium mobilization. Interacts with RNF113A; the interaction, enhanced by CXCL12, promotes CXCR4 ubiquitination and subsequent degradation. Interacts (via the cytoplasmic C-terminal) with ITCH (via the WW domains I and II); the interaction, enhanced by CXCL12, promotes CXCR4 ubiquitination and leads to its degradation. Interacts with extracellular ubiquitin. Interacts with DBN1; this interaction is enhanced by antigenic stimulation. Following LPS binding, may form a complex with GDF5, HSP90AA1 and HSPA8. Post-translationally, phosphorylated on agonist stimulation. Rapidly phosphorylated on serine and threonine residues in the C-terminal. Phosphorylation at Ser-324 and Ser-325 leads to recruitment of ITCH, ubiquitination and protein degradation. In terms of processing, ubiquitinated after ligand binding, leading to its degradation. Ubiquitinated by ITCH at the cell membrane on agonist stimulation. The ubiquitin-dependent mechanism, endosomal sorting complex required for transport (ESCRT), then targets CXCR4 for lysosomal degradation. This process is dependent also on prior Ser-/Thr-phosphorylation in the C-terminal of CXCR4. Also binding of ARRB1 to STAM negatively regulates CXCR4 sorting to lysosomes though modulating ubiquitination of SFR5S. Sulfation is required for efficient binding of CXCL12/SDF-1alpha and promotes its dimerization. Post-translationally, O- and N-glycosylated. N-glycosylation can mask coreceptor function. The O-glycosylation chondroitin sulfate attachment does not affect interaction with CXCL12/SDF-1alpha nor its coreceptor activity.

The protein resides in the cell membrane. It is found in the cell junction. It localises to the early endosome. Its subcellular location is the late endosome. The protein localises to the lysosome. In terms of biological role, receptor for the C-X-C chemokine CXCL12/SDF-1 that transduces a signal by increasing intracellular calcium ion levels and enhancing MAPK1/MAPK3 activation. Involved in the AKT signaling cascade. Plays a role in regulation of cell migration, e.g. during wound healing. Acts as a receptor for extracellular ubiquitin; leading to enhanced intracellular calcium ions and reduced cellular cAMP levels. Binds bacterial lipopolysaccharide (LPS) et mediates LPS-induced inflammatory response, including TNF secretion by monocytes. Involved in hematopoiesis and in cardiac ventricular septum formation. Also plays an essential role in vascularization of the gastrointestinal tract, probably by regulating vascular branching and/or remodeling processes in endothelial cells. Involved in cerebellar development. In the CNS, could mediate hippocampal-neuron survival. The sequence is that of C-X-C chemokine receptor type 4 (CXCR4) from Cercocebus atys (Sooty mangabey).